We begin with the raw amino-acid sequence, 299 residues long: Prohibitin-2 (299 aa).

Ala2 carries the post-translational modification N-acetylalanine. The necessary for transcriptional repression stretch occupies residues 19-49 (MGTALKLLLGAGAVAYGVRESVFTVEGGHRA). Tyr128 carries the post-translational modification Phosphotyrosine. Lys147 carries the N6-acetyllysine modification. Residues 150 to 174 (ASQLITQRAQVSLLIRRELTERAKD) form a necessary for transcriptional repression region. The residue at position 151 (Ser151) is a Phosphoserine. Residues 190 to 238 (SREYTAAVEAKQVAQQEAQRAQFLVEKAKQEQRQKIVQAEGEAEAAKML) are a coiled coil. N6-acetyllysine occurs at positions 200, 236, 250, and 262.

It belongs to the prohibitin family. The mitochondrial prohibitin complex consists of two subunits (PHB1 and PHB2), assembled into a membrane-associated ring-shaped supercomplex of approximately 1 mDa. Interacts with ESR1, HDAC1 and HDAC5. Interacts with ZNF703. Interacts with STOML2. Interacts with ARFGEF3. Interacts with SPHK2. Interacts with COX4I1; the interaction associates PHB2 with COX. Interacts with MAP1LC3B (membrane-bound form LC3-II); the interaction is direct and upon mitochondrial depolarization and proteasome-dependent outer membrane rupture. Interacts with IGFBP6 (via C-terminal domain). Interacts with CLPB. Interacts with CD86 (via cytoplasmic domain); the interactions increases after priming with CD40. Interacts with AFG3L2. Interacts with DNAJC19. Interacts with AKT2; this interaction may be important for myogenic differentiation. Phosphorylated. Tyrosine phosphorylation is indirectly stimulated by IGFBP6.

It is found in the mitochondrion inner membrane. The protein resides in the cytoplasm. Its subcellular location is the nucleus. The protein localises to the cell membrane. Its function is as follows. Protein with pleiotropic attributes mediated in a cell-compartment- and tissue-specific manner, which include the plasma membrane-associated cell signaling functions, mitochondrial chaperone, and transcriptional co-regulator of transcription factors and sex steroid hormones in the nucleus. Functionally, in the mitochondria, together with PHB, forms large ring complexes (prohibitin complexes) in the inner mitochondrial membrane (IMM) and functions as a chaperone protein that stabilizes mitochondrial respiratory enzymes and maintains mitochondrial integrity in the IMM, which is required for mitochondrial morphogenesis, neuronal survival, and normal lifespan. The prohibitin complex, with DNAJC19, regulates cardiolipin remodeling and the protein turnover of OMA1 in a cardiolipin-binding manner. Also regulates cytochrome-c oxidase assembly (COX) and mitochondrial respiration. Binding to sphingoid 1-phosphate (SPP) modulates its regulator activity. Has a key role of mitophagy receptor involved in targeting mitochondria for autophagic degradation. Involved in mitochondrial-mediated antiviral innate immunity, activates RIG-I-mediated signal transduction and production of IFNB1 and pro-inflammatory cytokine IL6. In the nucleus, serves as transcriptional co-regulator. Acts as a mediator of transcriptional repression by nuclear hormone receptors via recruitment of histone deacetylases. Functions as an estrogen receptor (ER)-selective coregulator that potentiates the inhibitory activities of antiestrogens and represses the activity of estrogens. Competes with NCOA1 for modulation of ER transcriptional activity. In terms of biological role, in the plasma membrane, is involved in IGFBP6-induced cell migration. Cooperates with CD86 to mediate CD86-signaling in B lymphocytes that regulates the level of IgG1 produced through the activation of distal signaling intermediates. Upon CD40 engagement, required to activate NF-kappa-B signaling pathway via phospholipase C and protein kinase C activation. The chain is Prohibitin-2 (PHB2) from Pongo abelii (Sumatran orangutan).